The chain runs to 249 residues: Ribonuclease PH (249 aa).

Phosphate is bound by residues Arg-86 and Gly-124–Arg-126.

Belongs to the RNase PH family. In terms of assembly, homohexameric ring arranged as a trimer of dimers.

It catalyses the reaction tRNA(n+1) + phosphate = tRNA(n) + a ribonucleoside 5'-diphosphate. Functionally, phosphorolytic 3'-5' exoribonuclease that plays an important role in tRNA 3'-end maturation. Removes nucleotide residues following the 3'-CCA terminus of tRNAs; can also add nucleotides to the ends of RNA molecules by using nucleoside diphosphates as substrates, but this may not be physiologically important. Probably plays a role in initiation of 16S rRNA degradation (leading to ribosome degradation) during starvation. The chain is Ribonuclease PH from Clostridium botulinum (strain Eklund 17B / Type B).